A 442-amino-acid polypeptide reads, in one-letter code: D-galactonate dehydratase family member SSLG_02014 (442 aa).

Histidine 161 contacts substrate. The active-site Proton donor/acceptor is tyrosine 197. Aspartate 246 lines the Mg(2+) pocket. Catalysis depends on histidine 248, which acts as the Proton donor/acceptor. Mg(2+)-binding residues include glutamate 272 and glutamate 298. Substrate is bound by residues glutamate 298, arginine 319, histidine 348, aspartate 352, and glutamate 375.

The protein belongs to the mandelate racemase/muconate lactonizing enzyme family. GalD subfamily. The cofactor is Mg(2+).

It carries out the reaction D-mannonate = 2-dehydro-3-deoxy-D-gluconate + H2O. Its function is as follows. Has low D-mannonate dehydratase activity (in vitro), suggesting that this is not a physiological substrate and that it has no significant role in D-mannonate degradation in vivo. Has no detectable activity with a panel of 70 other acid sugars (in vitro). This is D-galactonate dehydratase family member SSLG_02014 from Streptomyces sp. (strain SPB78).